A 431-amino-acid polypeptide reads, in one-letter code: MGMTITEKIIAAHAGRDYVEPGELVTVKVDLAIANDITAPLAIKQLEKYGIDKVHDPNKIALVMDHFFPPKDIMSAQQIKISRDFAKKMGIKNYFEGQDSGVMHTLLPEKGFVVPGDLVIGADSHTCTYGGIGAFSTGVGSTDIAYIWATGETWLRVPESMKFVFYNKPQKWVGGKDFVLTVIGKIGVDGALYKAMEYQGEAIRALDIDNRLTIANMAIEAGGKSGIIEPDEKTVDWVRKRTNREFKLYKSDPDAKYCCEYEFDASKIEPVVACPSLPSNVKPVSEVAGTHIDQVFIGSCTNGRLSDLRIAAAILKSKKVHPEVRCIVIPASDQIYKQALHEGIIEILADAGCLISTSTCGPCLGGHMGILAEGEVCLSTSNRNFVGRMGHPKSQVYLSSPAVAAASAVLGRIAHPDEVAKYEEVETLITL.

The [4Fe-4S] cluster site is built by Cys300, Cys360, and Cys363.

It belongs to the aconitase/IPM isomerase family. LeuC type 2 subfamily. Heterodimer of LeuC and LeuD. The cofactor is [4Fe-4S] cluster.

It catalyses the reaction (2R,3S)-3-isopropylmalate = (2S)-2-isopropylmalate. It participates in amino-acid biosynthesis; L-leucine biosynthesis; L-leucine from 3-methyl-2-oxobutanoate: step 2/4. Its function is as follows. Catalyzes the isomerization between 2-isopropylmalate and 3-isopropylmalate, via the formation of 2-isopropylmaleate. This Sulfurihydrogenibium sp. (strain YO3AOP1) protein is 3-isopropylmalate dehydratase large subunit.